A 163-amino-acid polypeptide reads, in one-letter code: MDGFLDLYLQFNIPSPIEEATWRHWFEIWLKELGVQEPCELSLCLTSDEHIRQLNREFRHLDEPTDVLAFAAQEMLAPFGIQDITGVRLLGDIVISVPTARAQAKAQGHRLSQELAWLASHGLLHLLGWDHPDELSLQRMLQQQRQLLAAIQLDGEVAHGQQP.

Zn(2+)-binding residues include His-121, His-125, and His-131.

It belongs to the endoribonuclease YbeY family. It depends on Zn(2+) as a cofactor.

It localises to the cytoplasm. Functionally, single strand-specific metallo-endoribonuclease involved in late-stage 70S ribosome quality control and in maturation of the 3' terminus of the 16S rRNA. The chain is Endoribonuclease YbeY from Synechococcus sp. (strain JA-2-3B'a(2-13)) (Cyanobacteria bacterium Yellowstone B-Prime).